Here is a 318-residue protein sequence, read N- to C-terminus: NADH-ubiquinone oxidoreductase chain 1 (318 aa).

Helical transmembrane passes span 2–22 (FMIN…FLTL), 76–96 (TLAL…YPLI), 102–122 (LLFI…SGWA), 146–166 (LAII…STLI), 171–191 (YLWL…STLA), 217–237 (AGPF…MNAL), 253–273 (ETYT…FLWV), and 294–314 (LPLT…ASCI).

The protein belongs to the complex I subunit 1 family. In terms of assembly, core subunit of respiratory chain NADH dehydrogenase (Complex I) which is composed of 45 different subunits.

The protein localises to the mitochondrion inner membrane. The enzyme catalyses a ubiquinone + NADH + 5 H(+)(in) = a ubiquinol + NAD(+) + 4 H(+)(out). In terms of biological role, core subunit of the mitochondrial membrane respiratory chain NADH dehydrogenase (Complex I) which catalyzes electron transfer from NADH through the respiratory chain, using ubiquinone as an electron acceptor. Essential for the catalytic activity and assembly of complex I. This Lemur catta (Ring-tailed lemur) protein is NADH-ubiquinone oxidoreductase chain 1 (MT-ND1).